Consider the following 851-residue polypeptide: MAKTNISPGMQQYLDIKKNYPDAFLLFRMGDFYELFYEDAVKAAQLLEIGLTSRNKNAENPIPMAGVPHHSAQQYIDVLIELGYKVAVAEQMEDPKQAVGVVKREVVQVITPGTVVDSAKPDSANNFLVAVDFDGCRYGLAYMDVSTGEFCVTDLADFTSVRSEIQNLKAKEVLLGFDLSEEEQTILVKQMNLLLSYEETVYEDKSLIDGQLTTVELTAAGKLLQYVHKTQMRELSHLQALVHYEIKDYLQMSYATKSSLDLVENARTNKKHGSLYWLLDETKTAMGMRLLRSWIDRPLVSKEAILERQEIIQVFLNAFIERTDLSNSLKGVYDIERLSSRVSFGKANPKDLLQLGHTLAQVPYIKAILESFDSPCVDKLVNDIDSLPELEYLIRTAIDPDAPATISEGSIIRNGFDERLDHYRKVMREGTGWIADIEAKERQESGINNLKIDYNKKDGYYFHVTNSNLSLVPEHFFRKATLKNSERYGTAELAKIEGQMLEAREESSSLEYDIFMCIRAQVETYINRLQKLAKTLATVDVLQSLAVVAETNHYIRPQFNDNHVITIQEGRHAVVEKVMGVQEYIPNSISFDQQTSIQLITGPNMSGKSTYMRQLALTVIMAQMGSFVAADHVDLPLFDAIFTRIGAADDLISGQSTFMVEMMEANQAIKRASDNSLILFDELGRGTATYDGMALAQAIIEYIHDRVGAKTIFATHYHELTDLSTKLTSLVNVHVATLEKDGDVTFLHKIAEGPADKSYGIHVAKIAGLPKSLLKRADEVLTRLETQSRSTEIMSVPPQVESSSAVRQGQLSLFGDDEKAHEIRQALEAIDVMNMTPFQAMTTLYELKKLL.

ATP is bound at residue 602-609 (GPNMSGKS).

Belongs to the DNA mismatch repair MutS family.

Its function is as follows. This protein is involved in the repair of mismatches in DNA. It is possible that it carries out the mismatch recognition step. This protein has a weak ATPase activity. The protein is DNA mismatch repair protein MutS of Streptococcus pyogenes serotype M2 (strain MGAS10270).